A 350-amino-acid polypeptide reads, in one-letter code: MIILGIETSCDETSASVLHNGVVLSNIVSSQHCHTSFGGVVPELASREHERLITAITETAINEANIQKDALDVIAATAGPGLIGAIMVGLCFAQGMACALNIPFVPINHIEAHIFSPFINSGANSPLPKEGYISLTVSGGHTLLALVKPDLSYTIVGKTLDDAAGEAFDKTGKMIGLPYPAGPVIDKLAENGNPNFYHFPRALTSRSKSRKSWEGNLDFSFSGMKTSVLTWLQQQSPESVASNLPDIAASIQAAIVDVLVEKSIAAAKHYNVSTIAIAGGVSANRGLRSSMQAACQQHGITLCLPETIYSTDNAAMIASIAALKLSHGMEPLYRYNVAPYASFLHKDNFS.

Residues His-109 and His-113 each contribute to the Fe cation site. Residues 136 to 140, Asp-169, Gly-182, Asp-186, and Asn-284 each bind substrate; that span reads TVSGG. Asp-312 contributes to the Fe cation binding site.

The protein belongs to the KAE1 / TsaD family. Requires Fe(2+) as cofactor.

The protein localises to the cytoplasm. It carries out the reaction L-threonylcarbamoyladenylate + adenosine(37) in tRNA = N(6)-L-threonylcarbamoyladenosine(37) in tRNA + AMP + H(+). Its function is as follows. Required for the formation of a threonylcarbamoyl group on adenosine at position 37 (t(6)A37) in tRNAs that read codons beginning with adenine. Is involved in the transfer of the threonylcarbamoyl moiety of threonylcarbamoyl-AMP (TC-AMP) to the N6 group of A37, together with TsaE and TsaB. TsaD likely plays a direct catalytic role in this reaction. In Chlorobium chlorochromatii (strain CaD3), this protein is tRNA N6-adenosine threonylcarbamoyltransferase.